The chain runs to 384 residues: Spermatogenesis-associated protein 32 (384 aa).

Residues 23–60 (RDDLSQHQIQEEQELEADMLEQKPQLQVDLDLDPDPDP) form a disordered region. A phosphoserine mark is found at Ser167 and Ser170. 3 disordered regions span residues 211-232 (DAHSAPPTTSSQAPSPLLSSDL), 284-310 (VEEREPENHAETLPEKPREARAPLKSW), and 340-366 (LLQPPATSPLLQGSKEDSVPPGKEKEN). Low complexity predominate over residues 214–231 (SAPPTTSSQAPSPLLSSD). The segment covering 353–366 (SKEDSVPPGKEKEN) has biased composition (basic and acidic residues).

In terms of assembly, interacts with syntaxin-1 and ACTB. As to expression, detected in testis, and on the acrosomal cap of spermatids.

This chain is Spermatogenesis-associated protein 32 (SPATA32), found in Homo sapiens (Human).